The following is a 277-amino-acid chain: Small ribosomal subunit protein uS3 (277 aa).

The KH type-2 domain occupies I43–K111. Residues F216–E277 are disordered. Over residues E264–E277 the composition is skewed to basic and acidic residues.

This sequence belongs to the universal ribosomal protein uS3 family. In terms of assembly, part of the 30S ribosomal subunit. Forms a tight complex with proteins S10 and S14.

Binds the lower part of the 30S subunit head. Binds mRNA in the 70S ribosome, positioning it for translation. This is Small ribosomal subunit protein uS3 from Bifidobacterium animalis subsp. lactis (strain AD011).